Reading from the N-terminus, the 216-residue chain is MOB kinase activator-like 2A (216 aa).

Zn(2+) is bound by residues Cys81, Cys86, His162, and His167.

This sequence belongs to the MOB1/phocein family.

It localises to the nucleus. In Arabidopsis thaliana (Mouse-ear cress), this protein is MOB kinase activator-like 2A.